The sequence spans 339 residues: UDP-galactose transporter homolog 1 (339 aa).

Residues methionine 1 to serine 4 lie on the Lumenal side of the membrane. A helical membrane pass occupies residues threonine 5–valine 25. Topologically, residues glutamine 26 to glutamine 42 are cytoplasmic. The chain crosses the membrane as a helical span at residues phenylalanine 43–leucine 63. Over asparagine 64 to tyrosine 106 the chain is Lumenal. A helical membrane pass occupies residues leucine 107–leucine 127. Topologically, residues tyrosine 128–lysine 136 are cytoplasmic. A helical transmembrane segment spans residues lysine 137 to glycine 157. Over lysine 158–glutamine 174 the chain is Lumenal. Residue asparagine 165 is glycosylated (N-linked (GlcNAc...) asparagine). The helical transmembrane segment at glycine 175–threonine 192 threads the bilayer. Residues glutamine 193–alanine 214 are Cytoplasmic-facing. A helical transmembrane segment spans residues histidine 215 to isoleucine 235. At aspartate 236–serine 245 the chain is on the lumenal side. The helical transmembrane segment at valine 246–methionine 266 threads the bilayer. At glycine 267–serine 280 the chain is on the cytoplasmic side. Residues leucine 281–glycine 303 traverse the membrane as a helical segment. Over lysine 304–arginine 307 the chain is Lumenal. The chain crosses the membrane as a helical span at residues phenylalanine 308–asparagine 327. Residues lysine 328–alanine 339 lie on the Cytoplasmic side of the membrane.

The protein belongs to the nucleotide-sugar transporter family. SLC35B subfamily.

Its subcellular location is the endoplasmic reticulum membrane. May be involved in specific transport of UDP-Gal from the cytosol to the Golgi lumen. Involved in the maintenance of optimal conditions for the folding of secretory pathway proteins in the endoplasmic reticulum. Overexpression confers resistance to the immunosuppressive drug, leflunomide. The sequence is that of UDP-galactose transporter homolog 1 (HUT1) from Saccharomyces cerevisiae (strain ATCC 204508 / S288c) (Baker's yeast).